We begin with the raw amino-acid sequence, 291 residues long: tRNA-uridine aminocarboxypropyltransferase 1 (291 aa).

The interval 158-181 (KNSAYEPSSKRPKFSPENDKNTYE) is disordered. A compositionally biased stretch (basic and acidic residues) spans 171–181 (FSPENDKNTYE). The DXTW signature appears at 199 to 202 (DSTW).

This sequence belongs to the TDD superfamily. DTWD1 family.

The protein localises to the nucleus. It catalyses the reaction a uridine in tRNA + S-adenosyl-L-methionine = a 3-[(3S)-3-amino-3-carboxypropyl]uridine in tRNA + S-methyl-5'-thioadenosine + H(+). In terms of biological role, catalyzes the formation of 3-(3-amino-3-carboxypropyl)uridine (acp3U) at position 20 in the D-loop of several cytoplasmic tRNAs (acp3U(20)). The chain is tRNA-uridine aminocarboxypropyltransferase 1 from Xenopus laevis (African clawed frog).